The following is a 339-amino-acid chain: Neutrophil cytosol factor 4 (339 aa).

The 122-residue stretch at 19-140 (DVAVSANIAD…IFFYQSAYDA (122 aa)) folds into the PX domain. Residues 58–60 (RYR) and 92–94 (KVY) each bind a 1,2-diacyl-sn-glycero-3-phospho-(1D-myo-inositol-3-phosphate). T154 carries the post-translational modification Phosphothreonine. In terms of domain architecture, SH3 spans 170-229 (MEAPRAEALFDFTGNSKLELSFKAGDVIFLLSKINKDWLEGTSQGATGIFPGSFVKILKD). The region spanning 237 to 329 (TNWLRCYFYE…FPWKLHVTQK (93 aa)) is the PB1 domain. At S315 the chain carries Phosphoserine.

Component of the phagocyte NADPH oxidase complex composed of an obligatory core heterodimer formed by the membrane proteins CYBA and CYBB and the cytosolic regulatory subunits NCF1/p47-phox, NCF2/p67-phox, NCF4/p40-phox and the small GTPase RAC1 or RAC2. Part of a cytosolic complex composed at least by NCF1, NCF2 and NCF4. Interacts with NCF2. Interacts with NCF1. The NCF2-NCF4 complex interacts with GBP7 (via GB1/RHD3-type G domain).

The protein resides in the cytoplasm. Its subcellular location is the cytosol. It is found in the endosome membrane. The protein localises to the membrane. Subunit of the phagocyte NADPH oxidase complex that mediates the transfer of electrons from cytosolic NADPH to O2 to produce the superoxide anion (O2(-)). In the activated complex, electrons are first transferred from NADPH to flavin adenine dinucleotide (FAD) and subsequently transferred via two heme molecules to molecular oxygen, producing superoxide through an outer-sphere reaction. Activation of the NADPH oxidase complex is initiated by the assembly of cytosolic subunits of the NADPH oxidase complex with the core NADPH oxidase complex to form a complex at the plasma membrane or phagosomal membrane. This activation process is initiated by phosphorylation dependent binding of the cytosolic NCF1/p47-phox subunit to the C-terminus of CYBA/p22-phox. The protein is Neutrophil cytosol factor 4 of Mus musculus (Mouse).